The sequence spans 904 residues: Disintegrin and metalloproteinase domain-containing protein 22 (904 aa).

Positions 1 to 23 (MQAAAAASFWLLCVLGTCPLARC) are cleaved as a signal peptide. Residues 24–223 (GRAGVASLKG…LKPRLKRRKR (200 aa)) constitute a propeptide that is removed on maturation. Topologically, residues 24 to 734 (GRAGVASLKG…LSGNGVAGTN (711 aa)) are extracellular. Residue Asn163 is glycosylated (N-linked (GlcNAc...) asparagine). The 200-residue stretch at 237–436 (KYIELMIVND…GGGACLFNKP (200 aa)) folds into the Peptidase M12B domain. 17 disulfide bridges follow: Cys347-Cys431, Cys390-Cys415, Cys392-Cys399, Cys445-Cys475, Cys456-Cys472, Cys458-Cys464, Cys471-Cys492, Cys483-Cys489, Cys488-Cys514, Cys501-Cys521, Cys508-Cys540, Cys533-Cys545, Cys552-Cys603, Cys567-Cys633, Cys581-Cys591, Cys598-Cys661, and Cys655-Cys666. Positions 442–529 (PPECGNGFIE…QCAPNVHKMD (88 aa)) constitute a Disintegrin domain. A glycan (N-linked (GlcNAc...) asparagine) is linked at Asn517. A glycan (N-linked (GlcNAc...) asparagine) is linked at Asn632. N-linked (GlcNAc...) asparagine glycosylation is present at Asn673. One can recognise an EGF-like domain in the interval 673 to 710 (NFSTCSSSKAGTVCSGNGVCSNELKCVCNRHWTGADCG). Intrachain disulfides connect Cys677–Cys692, Cys686–Cys698, and Cys700–Cys709. A helical membrane pass occupies residues 735-755 (IIIGIIAGTILVLALILGITA). The Cytoplasmic segment spans residues 756-857 (WGYKNYREQR…RFRPRSNSTE (102 aa)). Positions 769 to 904 (QGDYVKKPGD…QSARLWETSI (136 aa)) are disordered. The segment covering 789-808 (GGSTNSASSSKKRSNGLSHS) has biased composition (low complexity). Residues Ser808, Lys817, and Ser832 each carry the phosphoserine modification. Residues 809–827 (WSERIPDTKHISDICENGR) show a composition bias toward basic and acidic residues. The segment covering 840-851 (NKKKIRGKRFRP) has biased composition (basic residues). A phosphoserine mark is found at Ser855, Ser860, Ser864, Ser868, and Met882. Positions 860-875 (SPAKSPSSSTGSIASS) are enriched in low complexity.

In terms of assembly, interacts with LGI1. Can bind to LGI4. Interacts with KCNA2, DLG2 and DLG4. Interacts with ADAM11. Interacts (via C-terminus) with YWHAB/14-3-3 beta. Interacts (via C-terminus) with YWHAZ/14-3-3 zeta. In terms of processing, the precursor is cleaved by a furin endopeptidase. In terms of tissue distribution, detected in juxtaparanodal zones in the central nervous system and at nerve terminal plexuses of basket cells in the cerebellum (at protein level). Expressed at high levels in the brain. Strongly expressed in cerebellar granule cells and hippocampus. In spinal cord, expression is restricted to gray matter.

The protein resides in the cell membrane. It localises to the cell projection. It is found in the axon. In terms of biological role, probable ligand for integrin in the brain. This is a non catalytic metalloprotease-like protein. Involved in regulation of cell adhesion and spreading and in inhibition of cell proliferation. Neuronal receptor for LGI1. The sequence is that of Disintegrin and metalloproteinase domain-containing protein 22 (Adam22) from Mus musculus (Mouse).